We begin with the raw amino-acid sequence, 179 residues long: Large ribosomal subunit protein uL5 (179 aa).

Belongs to the universal ribosomal protein uL5 family. In terms of assembly, part of the 50S ribosomal subunit; part of the 5S rRNA/L5/L18/L25 subcomplex. Contacts the 5S rRNA and the P site tRNA. Forms a bridge to the 30S subunit in the 70S ribosome.

In terms of biological role, this is one of the proteins that bind and probably mediate the attachment of the 5S RNA into the large ribosomal subunit, where it forms part of the central protuberance. In the 70S ribosome it contacts protein S13 of the 30S subunit (bridge B1b), connecting the 2 subunits; this bridge is implicated in subunit movement. Contacts the P site tRNA; the 5S rRNA and some of its associated proteins might help stabilize positioning of ribosome-bound tRNAs. This chain is Large ribosomal subunit protein uL5, found in Halorhodospira halophila (strain DSM 244 / SL1) (Ectothiorhodospira halophila (strain DSM 244 / SL1)).